A 217-amino-acid chain; its full sequence is Fucoxanthin-chlorophyll a-c binding protein B, chloroplastic (217 aa).

The transit peptide at 1 to 39 (MKSAVMAVACAAAPGFRGPSAFNGAALTTSAKACSAMKM) directs the protein to the chloroplast. Transmembrane regions (helical) follow at residues 81 to 101 (IAML…PGML), 122 to 142 (IPPA…LAVM), and 183 to 203 (GRAA…NNKP).

Belongs to the fucoxanthin chlorophyll protein family. As to quaternary structure, the LHC complex of chromophytic algae is composed of fucoxanthin, chlorophyll A and C bound non-covalently by fucoxanthin chlorophyll proteins (FCPs). The ratio of pigments in this LHC is; fucoxanthin: chlorophyll C: chlorophyll A; (0.6-1): (0.1-0.3): (1).

The protein localises to the plastid. It localises to the chloroplast thylakoid membrane. Functionally, the light-harvesting complex (LHC) functions as a light receptor, it captures and delivers excitation energy to photosystems with which it is closely associated. Energy is transferred from the carotenoid and chlorophyll C (or B) to chlorophyll A and the photosynthetic reaction centers where it is used to synthesize ATP and reducing power. The polypeptide is Fucoxanthin-chlorophyll a-c binding protein B, chloroplastic (FCPB) (Macrocystis pyrifera (Giant kelp)).